A 99-amino-acid chain; its full sequence is Small ribosomal subunit protein bS6c (99 aa).

This sequence belongs to the bacterial ribosomal protein bS6 family.

The protein localises to the plastid. The protein resides in the chloroplast. Its function is as follows. Binds together with bS18 to 16S ribosomal RNA. The polypeptide is Small ribosomal subunit protein bS6c (Cyanidioschyzon merolae (strain NIES-3377 / 10D) (Unicellular red alga)).